A 282-amino-acid chain; its full sequence is Lipoyl synthase (282 aa).

Residues C37, C42, C48, C63, C67, C70, and S274 each coordinate [4Fe-4S] cluster. A Radical SAM core domain is found at 49–263; the sequence is WGKGTATFMI…KTIGLEKGFS (215 aa).

This sequence belongs to the radical SAM superfamily. Lipoyl synthase family. The cofactor is [4Fe-4S] cluster.

The protein resides in the cytoplasm. It carries out the reaction [[Fe-S] cluster scaffold protein carrying a second [4Fe-4S](2+) cluster] + N(6)-octanoyl-L-lysyl-[protein] + 2 oxidized [2Fe-2S]-[ferredoxin] + 2 S-adenosyl-L-methionine + 4 H(+) = [[Fe-S] cluster scaffold protein] + N(6)-[(R)-dihydrolipoyl]-L-lysyl-[protein] + 4 Fe(3+) + 2 hydrogen sulfide + 2 5'-deoxyadenosine + 2 L-methionine + 2 reduced [2Fe-2S]-[ferredoxin]. The protein operates within protein modification; protein lipoylation via endogenous pathway; protein N(6)-(lipoyl)lysine from octanoyl-[acyl-carrier-protein]: step 2/2. Functionally, catalyzes the radical-mediated insertion of two sulfur atoms into the C-6 and C-8 positions of the octanoyl moiety bound to the lipoyl domains of lipoate-dependent enzymes, thereby converting the octanoylated domains into lipoylated derivatives. The chain is Lipoyl synthase from Bacteroides thetaiotaomicron (strain ATCC 29148 / DSM 2079 / JCM 5827 / CCUG 10774 / NCTC 10582 / VPI-5482 / E50).